The following is a 142-amino-acid chain: Small ribosomal subunit protein uS12 (142 aa).

The segment at 1-43 (MPTFNQLVRKGRKVIEKKSNSPALQKGFNSKKKKPTDVNSPQK) is disordered. Asp-102 carries the 3-methylthioaspartic acid modification.

It belongs to the universal ribosomal protein uS12 family. As to quaternary structure, part of the 30S ribosomal subunit. Contacts proteins S8 and S17. May interact with IF1 in the 30S initiation complex.

Its function is as follows. With S4 and S5 plays an important role in translational accuracy. In terms of biological role, interacts with and stabilizes bases of the 16S rRNA that are involved in tRNA selection in the A site and with the mRNA backbone. Located at the interface of the 30S and 50S subunits, it traverses the body of the 30S subunit contacting proteins on the other side and probably holding the rRNA structure together. The combined cluster of proteins S8, S12 and S17 appears to hold together the shoulder and platform of the 30S subunit. In Ruminiclostridium cellulolyticum (strain ATCC 35319 / DSM 5812 / JCM 6584 / H10) (Clostridium cellulolyticum), this protein is Small ribosomal subunit protein uS12.